Here is a 349-residue protein sequence, read N- to C-terminus: Guanine nucleotide-binding protein alpha-13 subunit (349 aa).

Gly2 carries the N-myristoyl glycine lipid modification. Residue Cys3 is the site of S-palmitoyl cysteine attachment. The region spanning 35-349 (SHIRLLLLGS…VFKDIMKRKR (315 aa)) is the G-alpha domain. Residues 38-51 (RLLLLGSAESGKTT) form a G1 motif region. GTP is bound by residues 43-50 (GSAESGKT), 177-183 (IMAYVPT), 202-206 (DIGGQ), 271-274 (NEID), and Ala327. Positions 175 to 183 (DLIMAYVPT) are G2 motif. Residue Thr183 coordinates Mg(2+). Positions 198-207 (FQLFDIGGQK) are G3 motif. A G4 motif region spans residues 267-274 (YLFLNEID). The interval 325–330 (CIAIDT) is G5 motif.

The protein belongs to the G-alpha family. As to quaternary structure, g proteins are composed of 3 units; alpha, beta and gamma. The alpha chain contains the guanine nucleotide binding site.

Guanine nucleotide-binding proteins (G proteins) are involved as modulators or transducers in various transmembrane signaling systems. In Caenorhabditis briggsae, this protein is Guanine nucleotide-binding protein alpha-13 subunit.